The sequence spans 326 residues: Protein TMED8 (326 aa).

The disordered stretch occupies residues 1–80; that stretch reads MSDLQAAEGP…VSPGSKDATE (80 aa). Positions 160–324 constitute a GOLD domain; that stretch reads PPCIWTFAKV…NKTLYFHIYY (165 aa). Lysine 170 is modified (N6-acetyllysine). Residues 238–268 form a disordered region; the sequence is DSCDDEDEEEEEEEEIEEPVPAGDVERGSRS. The span at 239 to 255 shows a compositional bias: acidic residues; that stretch reads SCDDEDEEEEEEEEIEE.

The protein is Protein TMED8 (TMED8) of Pongo abelii (Sumatran orangutan).